The following is a 549-amino-acid chain: Zinc finger protein 18 (549 aa).

An SCAN box domain is found at 41–123 (RQLFRQFRYQ…TLVESLKGDP (83 aa)). Residues 211–283 (DLGASLLPAA…YLHVNEKIPR (73 aa)) enclose the KRAB domain. C2H2-type zinc fingers lie at residues 408-430 (PTCR…QRTH), 436-458 (FQCT…QRTH), 464-486 (CKCD…EKIH), 492-514 (YKCP…QRVH), and 520-542 (YKCS…QRSH).

This sequence belongs to the krueppel C2H2-type zinc-finger protein family.

The protein localises to the nucleus. Functionally, may be involved in transcriptional regulation. This chain is Zinc finger protein 18 (ZNF18), found in Homo sapiens (Human).